The chain runs to 342 residues: Glycerol-1-phosphate dehydrogenase [NAD(P)+] (342 aa).

NAD(+) contacts are provided by residues G84–D88 and T106–S109. D111 serves as a coordination point for substrate. S115 contacts NAD(+). D160 contributes to the substrate binding site. Residues D160 and H241 each coordinate Zn(2+). Substrate is bound at residue H245. H260 provides a ligand contact to Zn(2+).

Belongs to the glycerol-1-phosphate dehydrogenase family. Homodimer. Zn(2+) is required as a cofactor.

It is found in the cytoplasm. It carries out the reaction sn-glycerol 1-phosphate + NAD(+) = dihydroxyacetone phosphate + NADH + H(+). It catalyses the reaction sn-glycerol 1-phosphate + NADP(+) = dihydroxyacetone phosphate + NADPH + H(+). It functions in the pathway membrane lipid metabolism; glycerophospholipid metabolism. Catalyzes the NAD(P)H-dependent reduction of dihydroxyacetonephosphate (DHAP or glycerone phosphate) to glycerol 1-phosphate (G1P). The G1P thus generated is used as the glycerophosphate backbone of phospholipids in the cellular membranes of Archaea. This Pyrobaculum islandicum (strain DSM 4184 / JCM 9189 / GEO3) protein is Glycerol-1-phosphate dehydrogenase [NAD(P)+].